We begin with the raw amino-acid sequence, 663 residues long: Meiotically up-regulated gene 60 protein (663 aa).

Residues 578-644 (PAEMHFYVPE…SENLWAVRSL (67 aa)) enclose the KH domain.

The protein localises to the cytoplasm. It is found in the nucleus. Its subcellular location is the cytoskeleton. It localises to the microtubule organizing center. The protein resides in the spindle pole body. Has a role in meiosis. This is Meiotically up-regulated gene 60 protein (mug60) from Schizosaccharomyces pombe (strain 972 / ATCC 24843) (Fission yeast).